The following is a 240-amino-acid chain: 4-hydroxy-tetrahydrodipicolinate reductase (240 aa).

Residues 79-81 (ATT) and 103-106 (SANM) contribute to the NAD(+) site. Residue His135 is the Proton donor/acceptor of the active site. His136 is a binding site for (S)-2,3,4,5-tetrahydrodipicolinate. Lys139 functions as the Proton donor in the catalytic mechanism. 145–146 (GT) contributes to the (S)-2,3,4,5-tetrahydrodipicolinate binding site.

It belongs to the DapB family.

It is found in the cytoplasm. The catalysed reaction is (S)-2,3,4,5-tetrahydrodipicolinate + NAD(+) + H2O = (2S,4S)-4-hydroxy-2,3,4,5-tetrahydrodipicolinate + NADH + H(+). It catalyses the reaction (S)-2,3,4,5-tetrahydrodipicolinate + NADP(+) + H2O = (2S,4S)-4-hydroxy-2,3,4,5-tetrahydrodipicolinate + NADPH + H(+). The protein operates within amino-acid biosynthesis; L-lysine biosynthesis via DAP pathway; (S)-tetrahydrodipicolinate from L-aspartate: step 4/4. In terms of biological role, catalyzes the conversion of 4-hydroxy-tetrahydrodipicolinate (HTPA) to tetrahydrodipicolinate. The polypeptide is 4-hydroxy-tetrahydrodipicolinate reductase (Staphylococcus aureus (strain MRSA252)).